A 109-amino-acid chain; its full sequence is Small ribosomal subunit protein uS17 (109 aa).

Belongs to the universal ribosomal protein uS17 family. In terms of assembly, part of the 30S ribosomal subunit.

In terms of biological role, one of the primary rRNA binding proteins, it binds specifically to the 5'-end of 16S ribosomal RNA. The chain is Small ribosomal subunit protein uS17 from Methanococcoides burtonii (strain DSM 6242 / NBRC 107633 / OCM 468 / ACE-M).